The primary structure comprises 287 residues: Fructose-1,6-bisphosphatase class 1 (287 aa).

Positions 67, 87, 89, and 90 each coordinate Mg(2+). Residues 90-93 (DGSS), tyrosine 195, and lysine 225 contribute to the substrate site. Glutamate 231 contacts Mg(2+).

Belongs to the FBPase class 1 family. Homotetramer. Requires Mg(2+) as cofactor.

The protein localises to the cytoplasm. The enzyme catalyses beta-D-fructose 1,6-bisphosphate + H2O = beta-D-fructose 6-phosphate + phosphate. Its pathway is carbohydrate biosynthesis; gluconeogenesis. In Halobacterium salinarum (strain ATCC 29341 / DSM 671 / R1), this protein is Fructose-1,6-bisphosphatase class 1.